We begin with the raw amino-acid sequence, 231 residues long: Protein INCA1 (231 aa).

The interaction with CCNA1 and CCNA1/CDK2 complex; essential for CDK2 inhibitory activity stretch occupies residues 75-99 (SLHPLEGLPPPEKLWRRKRKKLHLE). Positions 90 to 95 (RRKRKK) match the Nuclear localization signal motif. At threonine 180 the chain carries Phosphothreonine.

This sequence belongs to the INCA family. In terms of assembly, interacts with CCNA1. Identified in a complex with CCNA1 and CDK2. Interacts with ZNF16; the interaction inhibits INCA1 activity and induces the cell cycle process. Interacts with SPACA9. Interacts with CCNA2, CCNB1 and CCNE1. Interacts with the CCNA1/CDK2 complex. Interacts with ING5, DAZAP2, RNF26, USP15, SPOUT1, DPH7, TRIM26 and RAB5C. Post-translationally, phosphorylated when part of a complex with CCNA1 and CDK2.

The protein localises to the nucleus. It localises to the cytoplasm. Its function is as follows. Binds to CDK2-bound cyclins and inhibits the kinase activity of CDK2; binding to cyclins is critical for its function as CDK inhibitor. Inhibits cell growth and proliferation and may play a role in cell cycle control. Required for ING5-mediated regulation of S-phase progression, enhancement of Fas-induced apoptosis and inhibition of cell growth. This is Protein INCA1 (Inca1) from Mus musculus (Mouse).